The primary structure comprises 87 residues: Olfactory receptor-like protein HbT2 (87 aa).

Residues 1-8 (KLWRMTGT) are Cytoplasmic-facing. A helical transmembrane segment spans residues 9–29 (WLGGFCHSIIQIPVIIQLPFC). Residues 30–55 (GPNVIDHYFRDLQPLFKLACTDTFME) are Extracellular-facing. Residues 56–76 (GVIVLAFSGLFSVFSFLILVS) form a helical membrane-spanning segment. Over 77–87 (SYIVILVNLRN) the chain is Cytoplasmic.

It belongs to the G-protein coupled receptor 1 family.

The protein resides in the cell membrane. Odorant receptor. The protein is Olfactory receptor-like protein HbT2 of Apis mellifera ligustica (Common honeybee).